A 494-amino-acid polypeptide reads, in one-letter code: Aspartyl/glutamyl-tRNA(Asn/Gln) amidotransferase subunit B (494 aa).

Belongs to the GatB/GatE family. GatB subfamily. As to quaternary structure, heterotrimer of A, B and C subunits.

The enzyme catalyses L-glutamyl-tRNA(Gln) + L-glutamine + ATP + H2O = L-glutaminyl-tRNA(Gln) + L-glutamate + ADP + phosphate + H(+). It catalyses the reaction L-aspartyl-tRNA(Asn) + L-glutamine + ATP + H2O = L-asparaginyl-tRNA(Asn) + L-glutamate + ADP + phosphate + 2 H(+). In terms of biological role, allows the formation of correctly charged Asn-tRNA(Asn) or Gln-tRNA(Gln) through the transamidation of misacylated Asp-tRNA(Asn) or Glu-tRNA(Gln) in organisms which lack either or both of asparaginyl-tRNA or glutaminyl-tRNA synthetases. The reaction takes place in the presence of glutamine and ATP through an activated phospho-Asp-tRNA(Asn) or phospho-Glu-tRNA(Gln). The sequence is that of Aspartyl/glutamyl-tRNA(Asn/Gln) amidotransferase subunit B from Rhodopseudomonas palustris (strain BisB5).